The sequence spans 212 residues: Protein GET1 (212 aa).

At 1-4 (MASL) the chain is on the lumenal side. Residues 5-24 (LLFVLVIQIITYLINTIGAR) form a helical membrane-spanning segment. Over 25-110 (TIDSLLWLLY…SFDWTIKTVR (86 aa)) the chain is Cytoplasmic. A coiled-coil region spans residues 75-99 (AKLRRRHDKAMEEYDVKNKKLSALK). The helical transmembrane segment at 111–131 (WVSTTGVTVILQFWFSKSPIF) threads the bilayer. Residues 132-155 (DLPRGWLPWQVEWILSFPRAPLGT) lie on the Lumenal side of the membrane. A helical transmembrane segment spans residues 156–172 (VSIQVWGGACGTVIALV). At 173-212 (GGAMGVAAPAFKKINQPRGEAQKMGTPRGSREQTPVRKTQ) the chain is on the cytoplasmic side. A disordered region spans residues 189–212 (PRGEAQKMGTPRGSREQTPVRKTQ). A compositionally biased stretch (basic and acidic residues) spans 201 to 212 (GSREQTPVRKTQ).

This sequence belongs to the WRB/GET1 family. Interacts with GET3.

The protein resides in the endoplasmic reticulum membrane. Required for the post-translational delivery of tail-anchored (TA) proteins to the endoplasmic reticulum. Acts as a membrane receptor for soluble GET3, which recognizes and selectively binds the transmembrane domain of TA proteins in the cytosol. This Arthroderma otae (strain ATCC MYA-4605 / CBS 113480) (Microsporum canis) protein is Protein GET1.